Consider the following 108-residue polypeptide: MGVQVETISPGDGRTFPKRGQTCVVHYTGMLEDGKKFDSSRDRNKPFKFVLGKQEVIRGWEEGVAQMSVGQRAKLTISPDYAYGATGHPGIIPPNATLIFDVELLKLE.

In terms of domain architecture, PPIase FKBP-type spans 20-108 (GQTCVVHYTG…IFDVELLKLE (89 aa)). Residue lysine 53 is modified to N6-acetyllysine; alternate. An N6-succinyllysine; alternate modification is found at lysine 53.

The protein belongs to the FKBP-type PPIase family. FKBP1 subfamily. Interacts with TGFBR1; prevents TGFBR1 phosphorylation by TGFBR2 and stabilizes it in the inactive conformation. Interacts with ACVR1B and SMAD7. Identified in a complex composed of RYR1, PDE4D, PKA, FKBP1A and protein phosphatase 1 (PP1). Interacts directly with RYR2 and RYR3. Interacts with GLMN; rapamycin and FK506 abolish the interaction with GLMN in a dose dependent manner. Interacts directly with RYR1.

It localises to the cytoplasm. The protein resides in the cytosol. The protein localises to the sarcoplasmic reticulum membrane. It carries out the reaction [protein]-peptidylproline (omega=180) = [protein]-peptidylproline (omega=0). Inhibited by both FK506 and rapamycin. Keeps in an inactive conformation TGFBR1, the TGF-beta type I serine/threonine kinase receptor, preventing TGF-beta receptor activation in absence of ligand. May modulate the RYR1 calcium channel activity. PPIases accelerate the folding of proteins. It catalyzes the cis-trans isomerization of proline imidic peptide bonds in oligopeptides. This Bos taurus (Bovine) protein is Peptidyl-prolyl cis-trans isomerase FKBP1A (FKBP1A).